The sequence spans 98 residues: Small ribosomal subunit protein bS6 (98 aa).

This sequence belongs to the bacterial ribosomal protein bS6 family.

Binds together with bS18 to 16S ribosomal RNA. The sequence is that of Small ribosomal subunit protein bS6 from Staphylococcus epidermidis (strain ATCC 35984 / DSM 28319 / BCRC 17069 / CCUG 31568 / BM 3577 / RP62A).